Consider the following 141-residue polypeptide: Large ribosomal subunit protein uL16 (141 aa).

It belongs to the universal ribosomal protein uL16 family. In terms of assembly, part of the 50S ribosomal subunit.

Functionally, binds 23S rRNA and is also seen to make contacts with the A and possibly P site tRNAs. The polypeptide is Large ribosomal subunit protein uL16 (Petrotoga mobilis (strain DSM 10674 / SJ95)).